The primary structure comprises 549 residues: Mitogen-activated protein kinase 15 (549 aa).

The segment at 1–20 (MCAAEVDRHVAQRYLIKRRL) is ubiquitin-conjugating. The 292-residue stretch at 14-305 (YLIKRRLGKG…AEQALQHPYV (292 aa)) folds into the Protein kinase domain. ATP contacts are provided by residues 20 to 28 (LGKGAYGIV) and K43. Catalysis depends on D138, which acts as the Proton acceptor. T176 is subject to Phosphothreonine. A TXY motif is present at residues 176-178 (TEY). Phosphotyrosine is present on Y178. A necessary to interact with ESRRA, to regulate its subcellular localization and to inhibit its transcriptional activity region spans residues 266–286 (LDALLPPDTPPEALDLLKRLL). The interval 301–382 (QHPYVQRFHC…ARTQSLKSGV (82 aa)) is requires for interaction with GABARAP, MAP1LC3B AND GABARAPL1. Residues 370 to 507 (ASPARTQSLK…PEPRPGRRMF (138 aa)) form a disordered region. PXXXP motif repeat units lie at residues 380–384 (SGVLP) and 387–391 (PAETP). PXXXP motif; regulates binding with chromatin and interaction with PCNA repeat units lie at residues 395-399 (RGPKP) and 403-407 (PGHDP). Over residues 403–416 (PGHDPEHVEVRRQS) the composition is skewed to basic and acidic residues. R451 carries the post-translational modification Omega-N-methylarginine. Residues 456 to 467 (SLTSQAEAQAAN) show a composition bias toward polar residues. The segment covering 483 to 492 (AVGARRVPSR) has biased composition (low complexity). The segment covering 493–502 (LPREAPEPRP) has biased composition (basic and acidic residues).

The protein belongs to the protein kinase superfamily. CMGC Ser/Thr protein kinase family. MAP kinase subfamily. In terms of assembly, interacts with TGFB1I1. Interacts with CSK/c-Src, ABL1 and RET. Interacts with GABARAP, MAP1LC3B and GABARAPL1; controls, in a kinase-dependent fashion, both basal and starvation-induced autophagy. Interacts with ESRRA; promotes re-localization of ESRRA to the cytoplasm through a XPO1-dependent mechanism then inhibits ESRRA transcriptional activity. Interacts with PCNA; the interaction is chromatin binding- and kinase activity-dependent and prevents MDM2-mediated PCNA destruction by inhibiting the association of PCNA with MDM2. Interacts with DVL2. Interacts with CLIC3; MAPK15 does not phosphorylates CLIC3. Post-translationally, autophosphorylated on Thr-176 and Tyr-178; activates the enzyme. Ubiquitinated. Ubiquitination may allow its tight kinase activity regulation and rapid turnover. May be ubiquitinated by a SCF E3 ligase. As to expression, expressed at all stages of oocyte meiotic maturation.

The protein resides in the cytoplasm. The protein localises to the cytoskeleton. Its subcellular location is the cilium basal body. It is found in the cell junction. It localises to the tight junction. The protein resides in the microtubule organizing center. The protein localises to the centrosome. Its subcellular location is the centriole. It is found in the cytoplasmic vesicle. It localises to the autophagosome. The protein resides in the golgi apparatus. The protein localises to the nucleus. Its subcellular location is the spindle. The enzyme catalyses L-seryl-[protein] + ATP = O-phospho-L-seryl-[protein] + ADP + H(+). It carries out the reaction L-threonyl-[protein] + ATP = O-phospho-L-threonyl-[protein] + ADP + H(+). Its activity is regulated as follows. Activated by threonine and tyrosine phosphorylation. Inhibited by dual specificity phosphatases, such as DUSP1. Phosphorylation and activation in response to DNA damaging agents, serum stimulation. Constitutively activated when phosphorylated on Tyr-178. Activity depends on the relative rates of MAPK15 autophosphorylation and dephosphorylation by PTPN1. Atypical MAPK protein that regulates several process such as autophagy, ciliogenesis, protein trafficking/secretion and genome integrity, in a kinase activity-dependent manner. Controls both, basal and starvation-induced autophagy throught its interaction with GABARAP, MAP1LC3B and GABARAPL1 leading to autophagosome formation, SQSTM1 degradation and reduced MAP1LC3B inhibitory phosphorylation. Regulates primary cilium formation and the localization of ciliary proteins involved in cilium structure, transport, and signaling. Prevents the relocation of the sugar-adding enzymes from the Golgi to the endoplasmic reticulum, thereby restricting the production of sugar-coated proteins. Upon amino-acid starvation, mediates transitional endoplasmic reticulum site disassembly and inhibition of secretion. Binds to chromatin leading to MAPK15 activation and interaction with PCNA, that which protects genomic integrity by inhibiting MDM2-mediated degradation of PCNA. Regulates DA transporter (DAT) activity and protein expression via activation of RhoA. In response to H(2)O(2) treatment phosphorylates ELAVL1, thus preventing it from binding to the PDCD4 3'UTR and rendering the PDCD4 mRNA accessible to miR-21 and leading to its degradation and loss of protein expression. Also functions in a kinase activity-independent manner as a negative regulator of growth. Phosphorylates in vitro FOS and MBP. During oocyte maturation, plays a key role in the microtubule organization and meiotic cell cycle progression in oocytes, fertilized eggs, and early embryos. Interacts with ESRRA promoting its re-localization from the nucleus to the cytoplasm and then prevents its transcriptional activity. The sequence is that of Mitogen-activated protein kinase 15 from Mus musculus (Mouse).